The sequence spans 502 residues: Maturase K (502 aa).

This sequence belongs to the intron maturase 2 family. MatK subfamily.

It localises to the plastid. The protein localises to the chloroplast. In terms of biological role, usually encoded in the trnK tRNA gene intron. Probably assists in splicing its own and other chloroplast group II introns. This chain is Maturase K, found in Spiraea cantoniensis (Reeve's meadowsweet).